We begin with the raw amino-acid sequence, 190 residues long: Adenine phosphoribosyltransferase (190 aa).

It belongs to the purine/pyrimidine phosphoribosyltransferase family. In terms of assembly, homodimer.

It localises to the cytoplasm. It catalyses the reaction AMP + diphosphate = 5-phospho-alpha-D-ribose 1-diphosphate + adenine. The protein operates within purine metabolism; AMP biosynthesis via salvage pathway; AMP from adenine: step 1/1. In terms of biological role, catalyzes a salvage reaction resulting in the formation of AMP, that is energically less costly than de novo synthesis. This is Adenine phosphoribosyltransferase from Treponema denticola (strain ATCC 35405 / DSM 14222 / CIP 103919 / JCM 8153 / KCTC 15104).